The chain runs to 169 residues: uncharacterized protein (169 aa).

An HD domain is found at 18-130 (VVEHCLAVSE…VAHADNLIFG (113 aa)).

This is an uncharacterized protein from Methanocaldococcus jannaschii (strain ATCC 43067 / DSM 2661 / JAL-1 / JCM 10045 / NBRC 100440) (Methanococcus jannaschii).